We begin with the raw amino-acid sequence, 131 residues long: Profilin (131 aa).

It belongs to the profilin family. As to quaternary structure, occurs in many kinds of cells as a complex with monomeric actin in a 1:1 ratio.

The protein localises to the cytoplasm. Its subcellular location is the cytoskeleton. Functionally, binds to actin and affects the structure of the cytoskeleton. At high concentrations, profilin prevents the polymerization of actin, whereas it enhances it at low concentrations. By binding to PIP2, it inhibits the formation of IP3 and DG. The sequence is that of Profilin from Prunus persica (Peach).